A 494-amino-acid polypeptide reads, in one-letter code: Keratin, type I cytoskeletal 12 (494 aa).

A compositionally biased stretch (polar residues) spans 1–12; sequence MDLSNNTMSLSV. A disordered region spans residues 1-32; sequence MDLSNNTMSLSVRTPGLSRRLSSQSVIGRPRG. The interval 1–124 is head; that stretch reads MDLSNNTMSL…GNDGGLLSGS (124 aa). The tract at residues 125 to 160 is coil 1A; it reads EKETMQNLNDRLASYLDKVRALEEANTELENKIREW. An IF rod domain is found at 125–440; it reads EKETMQNLND…RLLDGEAQGD (316 aa). The tract at residues 164 to 182 is linker 1; the sequence is RGTGTADASQSDYSKYYPL. The segment at 183-274 is coil 1B; the sequence is IEDLRNKIIS…KNHEDELQSF (92 aa). Positions 275–297 are linker 12; that stretch reads RVGGPGEVSVEMDAAPGVDLTRL. The interval 298–435 is coil 2; the sequence is LNDMRAQYET…IETYRRLLDG (138 aa). Residues 436–494 are tail; sequence EAQGDGLEESLFVTDSKSQAQSTDSSKDPTKTRKIKTVVQEMVNGEVVSSQVQEIEELM. The interval 446 to 468 is disordered; sequence LFVTDSKSQAQSTDSSKDPTKTR. Polar residues predominate over residues 448–459; it reads VTDSKSQAQSTD.

The protein belongs to the intermediate filament family. In terms of assembly, heterotetramer of two type I and two type II keratins. Keratin-3 associates with keratin-12. In terms of tissue distribution, expressed in the corneal epithelium (at protein level).

Its function is as follows. Involved in corneal epithelium organization, integrity and corneal keratin expression. The polypeptide is Keratin, type I cytoskeletal 12 (KRT12) (Homo sapiens (Human)).